A 130-amino-acid polypeptide reads, in one-letter code: UPF0212 protein TSIB_1358 (130 aa).

The protein belongs to the UPF0212 family.

The sequence is that of UPF0212 protein TSIB_1358 from Thermococcus sibiricus (strain DSM 12597 / MM 739).